The following is a 366-amino-acid chain: Peptide chain release factor 2 (366 aa).

Gln-251 carries the N5-methylglutamine modification.

It belongs to the prokaryotic/mitochondrial release factor family. Methylated by PrmC. Methylation increases the termination efficiency of RF2.

It localises to the cytoplasm. Peptide chain release factor 2 directs the termination of translation in response to the peptide chain termination codons UGA and UAA. This Bacillus subtilis (strain 168) protein is Peptide chain release factor 2 (prfB).